Consider the following 837-residue polypeptide: Histone acetyltransferase KAT2A (837 aa).

The disordered stretch occupies residues 1-99 (MAEPSQAPTP…RKAQVRGLPR (99 aa)). Ala2 bears the N-acetylalanine mark. Residues 7–51 (APTPAPAAQPRPLQSPAPAPTPTPAPSPASAPIPTPTPAPAPAPA) show a composition bias toward pro residues. A compositionally biased stretch (gly residues) spans 58–74 (TGTGGPGVGSGGAGSGG). Residues 75-87 (DPARPGLSQQQRA) are compositionally biased toward low complexity. Basic residues predominate over residues 88-99 (SQRKAQVRGLPR). Phosphoserine is present on Ser307. Residues 407 to 434 (FSPSMGGGSNSSLSLDSAGAEPMPGEKR) are disordered. Over residues 416 to 425 (NSSLSLDSAG) the composition is skewed to low complexity. One can recognise an N-acetyltransferase domain in the interval 503 to 656 (VIGNSLTPKA…GATLMECELN (154 aa)). Lys549 is subject to N6-acetyllysine. The Proton donor/acceptor role is filled by Glu575. Acetyl-CoA contacts are provided by residues 579–581 (CAV), 586–592 (QVKGYGT), and Tyr617. Succinyl-CoA is bound by residues 579–581 (CAV), 586–592 (QVKGYGT), and Tyr617. Residues 639 to 648 (LGYIKDYEGA) are loop 3. Residue Lys728 forms a Glycyl lysine isopeptide (Lys-Gly) (interchain with G-Cter in SUMO2) linkage. The 105-residue stretch at 728–832 (KDPDQLYTTL…KFFYFKLKEG (105 aa)) folds into the Bromo domain. Thr735 carries the phosphothreonine modification. Residues Lys759 and Lys791 each participate in a glycyl lysine isopeptide (Lys-Gly) (interchain with G-Cter in SUMO2) cross-link.

It belongs to the acetyltransferase family. GCN5 subfamily. As to quaternary structure, homooligomer; may form a tetramer of homodimers. Interacts with EP300, CREBBP and ADA2. Component of the TFTC-HAT complex, at least composed of TAF5L, TAF6L, TAF3, TADA3L, SUPT3H/SPT3, TAF2/TAFII150, TAF4/TAFII135, TAF5/TAFII100, KAT2A/GCN5L2, TAF10 and TRRAP. Component of the STAGA transcription coactivator-HAT complex, at least composed of SUPT3H, KAT2A, SUPT7L, TAF5L, TAF6L, TADA3L, TAD1L, TAF10, TAF12, TRRAP and TAF9. The STAGA core complex is associated with a subcomplex required for histone deubiquitination composed of ATXN7L3, ENY2 and USP22. Component of the ADA2A-containing complex (ATAC), composed of KAT14, KAT2A, TADA2L, TADA3L, ZZ3, MBIP, WDR5, YEATS2, CCDC101 and DR1. In the complex, it probably interacts directly with KAT14, MBIP and WDR5. Interacts with PML. Interacts with CEBPB. Interacts with TACC1, TACC2 and TACC3. Interacts with RELA. Interacts with NFATC2. Interacts with TBX5. Interacts with PLK4. Associates with the 2-oxoglutarate dehydrogenase complex. Interacts with XPC; leading to KAT2A recruitment to promoters and subsequent acetylation of histones. Interacts with ERCC3/XPB; leading to KAT2A recruitment to promoters and subsequent acetylation of histones. Interacts with ISL1. Interactions of ISL1 with MLIP1 or KAT2A may be mutually exclusive. In terms of assembly, (Microbial infection) Interacts with and acetylates HIV-1 Tat. In terms of processing, acetylated at Lys-549, inhibiting the protein acetyltransferase activity. Deacetylation at Lys-549 by SIRT6 promotes phosphorylation at Ser-307 and Thr-735 and subsequent activation of the protein acetyltransferase activity, leading to acetylation and inactivation of PPARGC1A. In terms of tissue distribution, expressed in all tissues tested.

The protein resides in the nucleus. It localises to the chromosome. Its subcellular location is the cytoplasm. It is found in the cytoskeleton. The protein localises to the microtubule organizing center. The protein resides in the centrosome. It carries out the reaction L-lysyl-[histone] + acetyl-CoA = N(6)-acetyl-L-lysyl-[histone] + CoA + H(+). It catalyses the reaction L-lysyl-[protein] + acetyl-CoA = N(6)-acetyl-L-lysyl-[protein] + CoA + H(+). The catalysed reaction is succinyl-CoA + L-lysyl-[protein] = N(6)-succinyl-L-lysyl-[protein] + CoA + H(+). The enzyme catalyses glutaryl-CoA + L-lysyl-[protein] = N(6)-glutaryl-L-lysyl-[protein] + CoA + H(+). Its function is as follows. Protein lysine acyltransferase that can act as a acetyltransferase, glutaryltransferase, succinyltransferase or malonyltransferase, depending on the context. Acts as a histone lysine succinyltransferase: catalyzes succinylation of histone H3 on 'Lys-79' (H3K79succ), with a maximum frequency around the transcription start sites of genes. Succinylation of histones gives a specific tag for epigenetic transcription activation. Association with the 2-oxoglutarate dehydrogenase complex, which provides succinyl-CoA, is required for histone succinylation. In different complexes, functions either as an acetyltransferase (HAT) or as a succinyltransferase: in the SAGA and ATAC complexes, acts as a histone acetyltransferase. Has significant histone acetyltransferase activity with core histones, but not with nucleosome core particles. Has a a strong preference for acetylation of H3 at 'Lys-9' (H3K9ac). Acetylation of histones gives a specific tag for epigenetic transcription activation. Recruited by the XPC complex at promoters, where it specifically mediates acetylation of histone variant H2A.Z.1/H2A.Z, thereby promoting expression of target genes. Involved in long-term memory consolidation and synaptic plasticity: acts by promoting expression of a hippocampal gene expression network linked to neuroactive receptor signaling. Acts as a positive regulator of T-cell activation: upon TCR stimulation, recruited to the IL2 promoter following interaction with NFATC2 and catalyzes acetylation of histone H3 at 'Lys-9' (H3K9ac), leading to promote IL2 expression. Required for growth and differentiation of craniofacial cartilage and bone by regulating acetylation of histone H3 at 'Lys-9' (H3K9ac). Regulates embryonic stem cell (ESC) pluripotency and differentiation. Also acetylates non-histone proteins, such as CEBPB, MRE11, PPARGC1A, PLK4 and TBX5. Involved in heart and limb development by mediating acetylation of TBX5, acetylation regulating nucleocytoplasmic shuttling of TBX5. Acts as a negative regulator of centrosome amplification by mediating acetylation of PLK4. Acts as a negative regulator of gluconeogenesis by mediating acetylation and subsequent inactivation of PPARGC1A. Also acts as a histone glutaryltransferase: catalyzes glutarylation of histone H4 on 'Lys-91' (H4K91glu), a mark that destabilizes nucleosomes by promoting dissociation of the H2A-H2B dimers from nucleosomes. Functionally, (Microbial infection) In case of HIV-1 infection, it is recruited by the viral protein Tat. Regulates Tat's transactivating activity and may help inducing chromatin remodeling of proviral genes. The sequence is that of Histone acetyltransferase KAT2A from Homo sapiens (Human).